The sequence spans 527 residues: Glutamate--cysteine ligase (527 aa).

The protein belongs to the glutamate--cysteine ligase type 1 family. Type 1 subfamily.

The catalysed reaction is L-cysteine + L-glutamate + ATP = gamma-L-glutamyl-L-cysteine + ADP + phosphate + H(+). The protein operates within sulfur metabolism; glutathione biosynthesis; glutathione from L-cysteine and L-glutamate: step 1/2. The polypeptide is Glutamate--cysteine ligase (Pseudomonas aeruginosa (strain UCBPP-PA14)).